Here is a 525-residue protein sequence, read N- to C-terminus: Signal recognition particle protein (525 aa).

GTP-binding positions include 107–114, 196–200, and 254–257; these read GLQGSGKT, DTAGR, and TKLD. Residues 437–525 are disordered; sequence GMGIPGIGRK…LSKLKFPGKK (89 aa). The span at 447–467 shows a compositional bias: basic residues; sequence SATRKSKGAKGKSGKKSKKGT. Residues 480–497 show a composition bias toward low complexity; it reads GVPGMPGLAGLPGGLPDL.

It belongs to the GTP-binding SRP family. SRP54 subfamily. Part of the signal recognition particle protein translocation system, which is composed of SRP and FtsY.

It is found in the cytoplasm. The catalysed reaction is GTP + H2O = GDP + phosphate + H(+). Functionally, involved in targeting and insertion of nascent membrane proteins into the cytoplasmic membrane. Binds to the hydrophobic signal sequence of the ribosome-nascent chain (RNC) as it emerges from the ribosomes. The SRP-RNC complex is then targeted to the cytoplasmic membrane where it interacts with the SRP receptor FtsY. In Mycobacterium bovis (strain ATCC BAA-935 / AF2122/97), this protein is Signal recognition particle protein.